The primary structure comprises 326 residues: Probable cell division protein WhiA (326 aa).

The H-T-H motif DNA-binding region spans 275–308; it reads SLDELGRLADPPMTKDAIAGRIRRLLAMADKRAL.

This sequence belongs to the WhiA family.

Its function is as follows. Involved in cell division and chromosome segregation. This chain is Probable cell division protein WhiA, found in Arthrobacter sp. (strain FB24).